The following is a 107-amino-acid chain: U1-lycotoxin-Ls1s (107 aa).

Residues 1-20 (MMKVLVVVALLVTLISYSSS) form the signal peptide. The propeptide occupies 21–41 (EGIDDLEADELLSLMANEQTR). Cystine bridges form between cysteine 44–cysteine 59, cysteine 51–cysteine 68, cysteine 58–cysteine 86, and cysteine 70–cysteine 84.

The protein belongs to the neurotoxin 19 (CSTX) family. 04 (U1-Lctx) subfamily. Expressed by the venom gland.

It is found in the secreted. This chain is U1-lycotoxin-Ls1s, found in Lycosa singoriensis (Wolf spider).